The primary structure comprises 108 residues: UPF0060 membrane protein YnfA (108 aa).

The Periplasmic portion of the chain corresponds to Met-1–Thr-5. A helical membrane pass occupies residues Leu-6–Leu-26. The Cytoplasmic portion of the chain corresponds to Lys-27–Ala-30. A helical transmembrane segment spans residues Ser-31–Leu-51. The Periplasmic portion of the chain corresponds to His-52–Tyr-60. A helical membrane pass occupies residues Ala-61–Val-81. The Cytoplasmic segment spans residues Lys-82–Thr-84. Residues Leu-85–Trp-105 form a helical membrane-spanning segment. Topologically, residues Gly-106–Thr-108 are periplasmic.

The protein belongs to the UPF0060 family.

The protein localises to the cell inner membrane. This Escherichia coli O139:H28 (strain E24377A / ETEC) protein is UPF0060 membrane protein YnfA.